The primary structure comprises 605 residues: MKTPEDPGSPKQHEVVDSAGTSTRDRQAPLPTEPKFDMLYKIEDVPPWYLCILLGFQHYLTCFSGTIAVPFLLAEALCVGRDQHMVSQLIGTIFTCVGITTLIQTTVGIRLPLFQASAFAFLVPAKSILALERWKCPSEEEIYGNWSMPLNTSHIWHPRIREVQGAIMVSSMVEVVIGLMGLPGALLSYIGPLTVTPTVSLIGLSVFQAAGDRAGSHWGISACSILLIVLFSQYLRNLTFLLPVYRWGKGLTLFRVQIFKMFPIVLAIMTVWLLCYVLTLTDVLPADPTVYGFQARTDARGDIMAISPWIRIPYPCQWGLPTVTVAAVLGMFSATLAGIIESIGDYYACARLAGAPPPPVHAINRGIFTEGICCIIAGLLGTGNGSTSSSPNIGVLGITKVGSRRVVQYGAGIMLILGAIGKFTALFASLPDPILGGMFCTLFGMITAVGLSNLQFVDMNSSRNLFVLGFSMFFGLTLPNYLDSNPGAINTGIPEVDQILTVLLTTEMFVGGCLAFILDNTVPGSPEERGLIQWKAGAHANSETSASLKSYDFPFGMGMVKRTTFFRYIPICPVFRGFSKKTQNQPPVLEDTPDNIETGSVCTKV.

Residues 1-30 (MKTPEDPGSPKQHEVVDSAGTSTRDRQAPL) form a disordered region. Residues 1–59 (MKTPEDPGSPKQHEVVDSAGTSTRDRQAPLPTEPKFDMLYKIEDVPPWYLCILLGFQHY) are Cytoplasmic-facing. The helical transmembrane segment at 60 to 80 (LTCFSGTIAVPFLLAEALCVG) threads the bilayer. Residues 81–88 (RDQHMVSQ) lie on the Extracellular side of the membrane. The chain crosses the membrane as a helical span at residues 89–109 (LIGTIFTCVGITTLIQTTVGI). Position 110 (R110) is a topological domain, cytoplasmic. A helical membrane pass occupies residues 111–131 (LPLFQASAFAFLVPAKSILAL). Over 132-166 (ERWKCPSEEEIYGNWSMPLNTSHIWHPRIREVQGA) the chain is Extracellular. N145 and N151 each carry an N-linked (GlcNAc...) asparagine glycan. A helical membrane pass occupies residues 167 to 187 (IMVSSMVEVVIGLMGLPGALL). The Cytoplasmic segment spans residues 188–214 (SYIGPLTVTPTVSLIGLSVFQAAGDRA). Residues 215 to 232 (GSHWGISACSILLIVLFS) form a helical membrane-spanning segment. Topologically, residues 233–236 (QYLR) are extracellular. The segment at residues 237 to 250 (NLTFLLPVYRWGKG) is an intramembrane region (helical). Topologically, residues 251 to 257 (LTLFRVQ) are extracellular. The chain crosses the membrane as a helical span at residues 258–278 (IFKMFPIVLAIMTVWLLCYVL). Over 279–319 (TLTDVLPADPTVYGFQARTDARGDIMAISPWIRIPYPCQWG) the chain is Cytoplasmic. A helical membrane pass occupies residues 320–340 (LPTVTVAAVLGMFSATLAGII). The Extracellular portion of the chain corresponds to 341–365 (ESIGDYYACARLAGAPPPPVHAINR). The helical transmembrane segment at 366 to 386 (GIFTEGICCIIAGLLGTGNGS) threads the bilayer. Topologically, residues 387–409 (TSSSPNIGVLGITKVGSRRVVQY) are cytoplasmic. A helical transmembrane segment spans residues 410-430 (GAGIMLILGAIGKFTALFASL). Residues 431–433 (PDP) are Extracellular-facing. Residues 434 to 454 (ILGGMFCTLFGMITAVGLSNL) traverse the membrane as a helical segment. Topologically, residues 455–464 (QFVDMNSSRN) are cytoplasmic. Residues 465–485 (LFVLGFSMFFGLTLPNYLDSN) form a helical membrane-spanning segment. Over 486-497 (PGAINTGIPEVD) the chain is Extracellular. A helical transmembrane segment spans residues 498–518 (QILTVLLTTEMFVGGCLAFIL). Residues 519 to 605 (DNTVPGSPEE…IETGSVCTKV (87 aa)) lie on the Cytoplasmic side of the membrane. At T598 the chain carries Phosphothreonine. S600 is modified (phosphoserine). At T603 the chain carries Phosphothreonine.

Belongs to the nucleobase:cation symporter-2 (NCS2) (TC 2.A.40) family. Phosphorylated. In terms of tissue distribution, expressed in kidney (at protein level).

It is found in the cell membrane. It carries out the reaction L-ascorbate(out) + 2 Na(+)(out) = L-ascorbate(in) + 2 Na(+)(in). The enzyme catalyses urate(out) + 2 Na(+)(out) = urate(in) + 2 Na(+)(in). Functionally, sodium:L-ascorbate cotransporter. Mediates electrogenic uptake of vitamin C, with a stoichiometry of 2 Na(+) for each L-ascorbate. Has retained some ancestral activity toward nucleobases such as urate, an oxidized purine. Low-affinity high-capacity sodium:urate cotransporter, may regulate serum urate levels by serving as a renal urate re-absorber. The protein is Solute carrier family 23 member 1 (Slc23a1) of Mus musculus (Mouse).